Here is a 486-residue protein sequence, read N- to C-terminus: MKFIVKLYPEIMMKSKSVRSRFTKMLETNIRNVLKKVDEDAKVQRQWDRIMVRVPADRPELVDAFAERLGCIPGIAHVVQVNEYTFDSVDHIYQQVLPLYREQLAGKTFCVRVKRTGQHDFKSIEVERYVGGGLNQHTDAVGVKLKNPDLTINLEIDHEKLYMVVRRIEGLGGFPMATQEDVLSLISGGFDSGVSSFQFIKKGARTHYCFFNLGGSQHEIGVKQVAYHLWKTYGESHKVKFISVPFEGVVQEILERIDNGQMGVILKRVMMRAATLLADKYGIQALVTGESLGQVSSQTLTNLNVIDRCTDLLILRPLIAMDKQDIINQSRIIGTEDFAKSIPEYCGVISQKPTVKAVLSKIEAEELKFSENLIENIVAQAKVIDIKDIAIEMDNQIAAAEAETVVAVDTQEVVIDIRAQEEEEKNPLSLPGKTVMTIPFFKLSTQFADLDKSVTYLLYCERGVMSKLQALYLIEQGYTNVKVYRP.

Positions 63–167 (DAFAERLGCI…HEKLYMVVRR (105 aa)) constitute a THUMP domain. Residues 185–186 (LI), Lys-267, Gly-289, and Gln-298 contribute to the ATP site. Cys-346 and Cys-460 form a disulfide bridge. Positions 408-486 (VDTQEVVIDI…GYTNVKVYRP (79 aa)) constitute a Rhodanese domain. Cys-460 acts as the Cysteine persulfide intermediate in catalysis.

It belongs to the ThiI family.

The protein resides in the cytoplasm. It carries out the reaction [ThiI sulfur-carrier protein]-S-sulfanyl-L-cysteine + a uridine in tRNA + 2 reduced [2Fe-2S]-[ferredoxin] + ATP + H(+) = [ThiI sulfur-carrier protein]-L-cysteine + a 4-thiouridine in tRNA + 2 oxidized [2Fe-2S]-[ferredoxin] + AMP + diphosphate. The enzyme catalyses [ThiS sulfur-carrier protein]-C-terminal Gly-Gly-AMP + S-sulfanyl-L-cysteinyl-[cysteine desulfurase] + AH2 = [ThiS sulfur-carrier protein]-C-terminal-Gly-aminoethanethioate + L-cysteinyl-[cysteine desulfurase] + A + AMP + 2 H(+). The protein operates within cofactor biosynthesis; thiamine diphosphate biosynthesis. Its function is as follows. Catalyzes the ATP-dependent transfer of a sulfur to tRNA to produce 4-thiouridine in position 8 of tRNAs, which functions as a near-UV photosensor. Also catalyzes the transfer of sulfur to the sulfur carrier protein ThiS, forming ThiS-thiocarboxylate. This is a step in the synthesis of thiazole, in the thiamine biosynthesis pathway. The sulfur is donated as persulfide by IscS. The protein is tRNA sulfurtransferase of Shewanella denitrificans (strain OS217 / ATCC BAA-1090 / DSM 15013).